The sequence spans 154 residues: Homeobox protein engrailed (154 aa).

Positions 37–96 (EKRPRTAFSASQLQRLKQEFQQSNYLTEQRRRSLAKELTLSESQIKIWFQNKRAKIKKAS) form a DNA-binding region, homeobox. The tract at residues 127–154 (KLLNGQNTSGDCSRSDYTSDSDGDSLTH) is disordered. The segment covering 129–144 (LNGQNTSGDCSRSDYT) has biased composition (polar residues). Over residues 145-154 (SDSDGDSLTH) the composition is skewed to acidic residues.

The protein belongs to the engrailed homeobox family.

It is found in the nucleus. The protein is Homeobox protein engrailed (EN) of Tripneustes gratilla (Hawaian sea urchin).